The primary structure comprises 465 residues: Argininosuccinate lyase (465 aa).

The protein belongs to the lyase 1 family. Argininosuccinate lyase subfamily.

Its subcellular location is the cytoplasm. The enzyme catalyses 2-(N(omega)-L-arginino)succinate = fumarate + L-arginine. Its pathway is amino-acid biosynthesis; L-arginine biosynthesis; L-arginine from L-ornithine and carbamoyl phosphate: step 3/3. In Rhodopseudomonas palustris (strain ATCC BAA-98 / CGA009), this protein is Argininosuccinate lyase.